Here is a 563-residue protein sequence, read N- to C-terminus: Cysteine--tRNA ligase, chloroplastic/mitochondrial (563 aa).

Residue cysteine 91 participates in Zn(2+) binding. Glycine 92 lines the L-cysteine pocket. A 'HIGH' region motif is present at residues valine 93–histidine 103. Threonine 131 serves as a coordination point for L-cysteine. The short motif at lysine 136–alanine 139 is the 'KIIK' region element. Residues cysteine 271, histidine 296, and glutamate 300 each contribute to the Zn(2+) site. Position 296 (histidine 296) interacts with L-cysteine. Residues lysine 328–serine 332 carry the 'KMSKS' region motif. Position 331 (lysine 331) interacts with ATP.

The protein belongs to the class-I aminoacyl-tRNA synthetase family. Requires Zn(2+) as cofactor.

The protein localises to the plastid. The protein resides in the chloroplast. Its subcellular location is the mitochondrion. The enzyme catalyses tRNA(Cys) + L-cysteine + ATP = L-cysteinyl-tRNA(Cys) + AMP + diphosphate. In terms of biological role, required for female gametophyte development. Is necessary for the fusion of central cell nuclei and programmed cell death (PCD) of the antipodals. The chain is Cysteine--tRNA ligase, chloroplastic/mitochondrial from Arabidopsis thaliana (Mouse-ear cress).